Reading from the N-terminus, the 720-residue chain is Translation initiation factor IF-2 (720 aa).

Residues 48–138 (KKFKASQAKD…NEVEETKEMP (91 aa)) form a disordered region. Composition is skewed to low complexity over residues 60–75 (KQNT…NKQN) and 99–113 (KGKQ…NKNQ). Over residues 114-123 (KNNKNKKNNK) the composition is skewed to basic residues. A tr-type G domain is found at 222–391 (ERPAVVTIMG…GLVAEVQELK (170 aa)). A G1 region spans residues 231-238 (GHVDHGKT). 231-238 (GHVDHGKT) contributes to the GTP binding site. The G2 stretch occupies residues 256–260 (GITQH). Positions 277 to 280 (DTPG) are G3. Residues 277-281 (DTPGH) and 331-334 (NKID) each bind GTP. The tract at residues 331–334 (NKID) is G4. The segment at 367-369 (SAL) is G5.

Belongs to the TRAFAC class translation factor GTPase superfamily. Classic translation factor GTPase family. IF-2 subfamily.

Its subcellular location is the cytoplasm. One of the essential components for the initiation of protein synthesis. Protects formylmethionyl-tRNA from spontaneous hydrolysis and promotes its binding to the 30S ribosomal subunits. Also involved in the hydrolysis of GTP during the formation of the 70S ribosomal complex. The chain is Translation initiation factor IF-2 from Staphylococcus epidermidis (strain ATCC 35984 / DSM 28319 / BCRC 17069 / CCUG 31568 / BM 3577 / RP62A).